A 142-amino-acid chain; its full sequence is Prefoldin subunit alpha (142 aa).

Belongs to the prefoldin subunit alpha family. As to quaternary structure, heterohexamer of two alpha and four beta subunits.

Its subcellular location is the cytoplasm. Molecular chaperone capable of stabilizing a range of proteins. Seems to fulfill an ATP-independent, HSP70-like function in archaeal de novo protein folding. The protein is Prefoldin subunit alpha of Methanosarcina mazei (strain ATCC BAA-159 / DSM 3647 / Goe1 / Go1 / JCM 11833 / OCM 88) (Methanosarcina frisia).